We begin with the raw amino-acid sequence, 438 residues long: Putative metabolite transport protein HI_0281 (438 aa).

Residues 1–17 (MSTQLRNNPMKVALASM) lie on the Cytoplasmic side of the membrane. A helical transmembrane segment spans residues 18–38 (VGTAIEFFDYYIYAAAAVLVF). Topologically, residues 39–52 (NTQFFHSDDPLSND) are periplasmic. The helical transmembrane segment at 53-73 (LLSLSTLALAFFARPIGSALF) threads the bilayer. Over 74-85 (GHFGDKIGRKKT) the chain is Cytoplasmic. A helical transmembrane segment spans residues 86–106 (LVASLVLMGGSTVVIGLLPNY). At 107–115 (AQIGIWAPI) the chain is on the periplasmic side. The chain crosses the membrane as a helical span at residues 116–136 (LLCVCRVGQGIGLGGEWGGAA). Residues 137–156 (LVATENAPEGKRAWYGTFPQ) lie on the Cytoplasmic side of the membrane. A helical membrane pass occupies residues 157–177 (LGAPIGLFVANGTFFLVSYLL). Topologically, residues 178–181 (GHNA) are periplasmic. A helical transmembrane segment spans residues 182–202 (LVEWAWRIPFVSSILLVAVGL). At 203–239 (YVRLTLHESHVFVEAEQKGKKLNAPVSVVFTKHLKPM) the chain is on the cytoplasmic side. Residues 240–260 (VIGTFIMVATYSLFYIMTAFA) form a helical membrane-spanning segment. Residues 261–286 (QAYSRTAPKLSEAGYALGLGIPANTF) are Periplasmic-facing. Residues 287–307 (TGLLLISAIVFGIFISISGFY) form a helical membrane-spanning segment. The Cytoplasmic segment spans residues 308 to 314 (ADKIGRR). The chain crosses the membrane as a helical span at residues 315–336 (KWLIWVTIAIGVLGLAMPLFLE). Over 337-342 (NGTPVS) the chain is Periplasmic. The helical transmembrane segment at 343–363 (VFAFLVIGMAIMGMTFGPMAA) threads the bilayer. The Cytoplasmic segment spans residues 364 to 377 (LLPELFPTEVRYSG). Residues 378 to 398 (ASLAYNLASIIGATIAAMISL) traverse the membrane as a helical segment. Residues 399–405 (KINASFG) are Periplasmic-facing. A helical transmembrane segment spans residues 406-426 (VMGVGIYLAINALMTFLALLA). Residues 427-438 (SKETKNVDLTEI) are Cytoplasmic-facing.

This sequence belongs to the major facilitator superfamily. Sugar transporter (TC 2.A.1.1) family.

The protein resides in the cell inner membrane. This Haemophilus influenzae (strain ATCC 51907 / DSM 11121 / KW20 / Rd) protein is Putative metabolite transport protein HI_0281.